We begin with the raw amino-acid sequence, 185 residues long: Crossover junction endodeoxyribonuclease RuvC (185 aa).

Active-site residues include Asp7, Glu68, and Asp141. Positions 7, 68, and 141 each coordinate Mg(2+).

The protein belongs to the RuvC family. Homodimer which binds Holliday junction (HJ) DNA. The HJ becomes 2-fold symmetrical on binding to RuvC with unstacked arms; it has a different conformation from HJ DNA in complex with RuvA. In the full resolvosome a probable DNA-RuvA(4)-RuvB(12)-RuvC(2) complex forms which resolves the HJ. It depends on Mg(2+) as a cofactor.

It localises to the cytoplasm. The catalysed reaction is Endonucleolytic cleavage at a junction such as a reciprocal single-stranded crossover between two homologous DNA duplexes (Holliday junction).. Its function is as follows. The RuvA-RuvB-RuvC complex processes Holliday junction (HJ) DNA during genetic recombination and DNA repair. Endonuclease that resolves HJ intermediates. Cleaves cruciform DNA by making single-stranded nicks across the HJ at symmetrical positions within the homologous arms, yielding a 5'-phosphate and a 3'-hydroxyl group; requires a central core of homology in the junction. The consensus cleavage sequence is 5'-(A/T)TT(C/G)-3'. Cleavage occurs on the 3'-side of the TT dinucleotide at the point of strand exchange. HJ branch migration catalyzed by RuvA-RuvB allows RuvC to scan DNA until it finds its consensus sequence, where it cleaves and resolves the cruciform DNA. This Helicobacter hepaticus (strain ATCC 51449 / 3B1) protein is Crossover junction endodeoxyribonuclease RuvC.